The primary structure comprises 356 residues: S-adenosylmethionine:tRNA ribosyltransferase-isomerase (356 aa).

The protein belongs to the QueA family. Monomer.

It localises to the cytoplasm. The catalysed reaction is 7-aminomethyl-7-carbaguanosine(34) in tRNA + S-adenosyl-L-methionine = epoxyqueuosine(34) in tRNA + adenine + L-methionine + 2 H(+). The protein operates within tRNA modification; tRNA-queuosine biosynthesis. Its function is as follows. Transfers and isomerizes the ribose moiety from AdoMet to the 7-aminomethyl group of 7-deazaguanine (preQ1-tRNA) to give epoxyqueuosine (oQ-tRNA). This chain is S-adenosylmethionine:tRNA ribosyltransferase-isomerase, found in Xanthomonas campestris pv. campestris (strain B100).